Consider the following 1332-residue polypeptide: Abscisic-aldehyde oxidase (1332 aa).

Residues 1 to 88 enclose the 2Fe-2S ferredoxin-type domain; that stretch reads MDLEFAVNGE…GCSITTSEGL (88 aa). Residues Cys-40, Cys-45, and Cys-48 each coordinate [2Fe-2S] cluster. One can recognise an FAD-binding PCMH-type domain in the interval 219-400; the sequence is SDHLKYRWTT…LKVEIPSWTA (182 aa).

It belongs to the xanthine dehydrogenase family. As to quaternary structure, aldehyde oxidases (AO) are homodimers and heterodimers of AO subunits. AO-delta is a AAO3 homodimer. AAO3 also forms a dimer with AAO2. Interacts with PUB44, and this interaction probably results in targeting of this protein to the proteasome. [2Fe-2S] cluster serves as cofactor. Requires FAD as cofactor. The cofactor is Mo-molybdopterin. In terms of tissue distribution, expressed in vascular tissues of all organs, particularly in phloem companion cells and xylem parenchymatic cells. Highly expressed in roots and rosettes, and to lower extent in seedlings, stems and flowers. Expressed at very low levels in siliques and dry seeds. Also detected in root dividing cells (tips and primordia), in mesophyll cells and inside the guard cells.

It is found in the cytoplasm. The catalysed reaction is 2-cis-(+)-abscisic aldehyde + O2 + H2O = 2-cis-(+)-abscisate + H2O2 + H(+). It catalyses the reaction 1-naphthaldehyde + O2 + H2O = 1-naphthoate + H2O2 + H(+). It carries out the reaction indole-3-acetaldehyde + O2 + H2O = (indol-3-yl)acetate + H2O2 + H(+). In terms of biological role, in higher plants aldehyde oxidases (AO) appear to be homo- and heterodimeric assemblies of AO subunits with probably different physiological functions. AO-delta may be involved in the last step of abscisic acid biosynthesis, at least in leaves and seeds. In vitro, AO-delta oxidizes abscisic aldehyde to abscisic acid (ABA). In vitro, AO-delta also uses 1-naphthaldehyde, indole-3-aldehyde (IAld), benzaldehyde and cinnamaldehyde as substrate; the AAO2-AAO3 dimer also uses abscisic aldehyde as substrate. This Arabidopsis thaliana (Mouse-ear cress) protein is Abscisic-aldehyde oxidase (AAO3).